We begin with the raw amino-acid sequence, 348 residues long: Protein RecA (348 aa).

Glycine 65–threonine 72 contacts ATP.

It belongs to the RecA family.

Its subcellular location is the cytoplasm. Functionally, can catalyze the hydrolysis of ATP in the presence of single-stranded DNA, the ATP-dependent uptake of single-stranded DNA by duplex DNA, and the ATP-dependent hybridization of homologous single-stranded DNAs. It interacts with LexA causing its activation and leading to its autocatalytic cleavage. The sequence is that of Protein RecA from Saccharophagus degradans (strain 2-40 / ATCC 43961 / DSM 17024).